The primary structure comprises 848 residues: Probable disease resistance protein At5g43730 (848 aa).

Residues Ser-25–Lys-62 are a coiled coil. The NB-ARC domain occupies Val-137–Tyr-439. An ATP-binding site is contributed by Gly-179–Thr-186. LRR repeat units lie at residues Asn-534–Phe-555, Lys-558–Leu-580, Ser-582–Arg-604, Lys-605–Leu-627, and Asn-629–Glu-649.

The protein belongs to the disease resistance NB-LRR family.

Functionally, probable disease resistance protein. The sequence is that of Probable disease resistance protein At5g43730 from Arabidopsis thaliana (Mouse-ear cress).